A 523-amino-acid polypeptide reads, in one-letter code: Mediator of RNA polymerase II transcription subunit 1.2 (523 aa).

This sequence belongs to the Mediator complex subunit 1 family. In terms of assembly, component of the Mediator complex.

The protein localises to the nucleus. Functionally, component of the Mediator complex, a coactivator involved in the regulated transcription of nearly all RNA polymerase II-dependent genes. Mediator functions as a bridge to convey information from gene-specific regulatory proteins to the basal RNA polymerase II transcription machinery. Mediator is recruited to promoters by direct interactions with regulatory proteins and serves as a scaffold for the assembly of a functional preinitiation complex with RNA polymerase II and the general transcription factors. The polypeptide is Mediator of RNA polymerase II transcription subunit 1.2 (mdt-1.2) (Caenorhabditis briggsae).